We begin with the raw amino-acid sequence, 89 residues long: Putative antitoxin VapB42 (89 aa).

Possibly the antitoxin component of a type II toxin-antitoxin (TA) system. Its cognate toxin is VapC42 (Potential). In Mycobacterium tuberculosis (strain CDC 1551 / Oshkosh), this protein is Putative antitoxin VapB42 (vapB42).